Reading from the N-terminus, the 257-residue chain is UPF0246 protein Shal_1126 (257 aa).

The protein belongs to the UPF0246 family.

The sequence is that of UPF0246 protein Shal_1126 from Shewanella halifaxensis (strain HAW-EB4).